The primary structure comprises 89 residues: Cell division protein ZapA (89 aa).

Belongs to the ZapA family. Type 2 subfamily. As to quaternary structure, homodimer. Interacts with FtsZ.

The protein resides in the cytoplasm. Activator of cell division through the inhibition of FtsZ GTPase activity, therefore promoting FtsZ assembly into bundles of protofilaments necessary for the formation of the division Z ring. It is recruited early at mid-cell but it is not essential for cell division. In Bacillus thuringiensis (strain Al Hakam), this protein is Cell division protein ZapA.